Consider the following 830-residue polypeptide: Serine/threonine-protein kinase pkn2 (830 aa).

Residues 1–605 (MLAPDSLVLD…GELLRQRRRE (605 aa)) lie on the Cytoplasmic side of the membrane. Positions 13–283 (FRVLRPLGSG…DALAAAHSAL (271 aa)) constitute a Protein kinase domain. ATP is bound by residues 19 to 27 (LGSGGMGEV) and Lys42. Asp135 functions as the Proton acceptor in the catalytic mechanism. Residues 296 to 326 (VPQPGSGATPSSGTSVFGTGSASGSSSGPTG) form a disordered region. The span at 299 to 326 (PGSGATPSSGTSVFGTGSASGSSSGPTG) shows a compositional bias: low complexity. Residues 396-511 (TVMLTDIQGF…EPMEVIEAVE (116 aa)) enclose the Guanylate cyclase domain. The chain crosses the membrane as a helical span at residues 606-623 (AALVAGAVVLLGAGAAWL). Residues 624–830 (SQRNDAGTRA…AIKSLKQKSD (207 aa)) are Periplasmic-facing.

This sequence belongs to the protein kinase superfamily. Ser/Thr protein kinase family.

It localises to the cell membrane. It catalyses the reaction L-seryl-[protein] + ATP = O-phospho-L-seryl-[protein] + ADP + H(+). The enzyme catalyses L-threonyl-[protein] + ATP = O-phospho-L-threonyl-[protein] + ADP + H(+). Its function is as follows. Regulates the activity of endogenous beta-lactamase or related enzymes, by blocking their secretion by phosphorylation, in response to an external signal yet to be identified. This is Serine/threonine-protein kinase pkn2 (pkn2) from Myxococcus xanthus.